Here is a 211-residue protein sequence, read N- to C-terminus: Protein-methionine-sulfoxide reductase heme-binding subunit MsrQ (211 aa).

The next 5 helical transmembrane spans lie at 8 to 28, 54 to 74, 82 to 102, 116 to 136, and 153 to 173; these read VIWL…WLVW, FLLA…PLLI, LWCF…ELGV, PYLT…FTST, and FVYL…KIIS.

It belongs to the MsrQ family. Heterodimer of a catalytic subunit (MsrP) and a heme-binding subunit (MsrQ). Requires FMN as cofactor. The cofactor is heme b.

It is found in the cell inner membrane. Its function is as follows. Part of the MsrPQ system that repairs oxidized periplasmic proteins containing methionine sulfoxide residues (Met-O), using respiratory chain electrons. Thus protects these proteins from oxidative-stress damage caused by reactive species of oxygen and chlorine generated by the host defense mechanisms. MsrPQ is essential for the maintenance of envelope integrity under bleach stress, rescuing a wide series of structurally unrelated periplasmic proteins from methionine oxidation, including the primary periplasmic chaperone SurA and the lipoprotein Pal. MsrQ provides electrons for reduction to the reductase catalytic subunit MsrP, using the quinone pool of the respiratory chain. The sequence is that of Protein-methionine-sulfoxide reductase heme-binding subunit MsrQ from Escherichia coli O6:K15:H31 (strain 536 / UPEC).